Consider the following 432-residue polypeptide: Keratin, type I cytoskeletal 17 (432 aa).

The interval 1-24 is disordered; that stretch reads MTTSIRQFTSSSSIKGSSGLGGGS. Residues 1 to 83 are head; the sequence is MTTSIRQFTS…GGVDGLLAGG (83 aa). Phosphoserine is present on residues S12 and S13. K15 is covalently cross-linked (Glycyl lysine isopeptide (Lys-Gly) (interchain with G-Cter in SUMO1); alternate). K15 is covalently cross-linked (Glycyl lysine isopeptide (Lys-Gly) (interchain with G-Cter in SUMO2); alternate). 3 positions are modified to phosphoserine: S25, S32, and S39. S44 is modified (phosphoserine; by RPS6KA1). Residues 84 to 120 are coil 1A; that stretch reads EKATMQNLNDRLASYLDKVRALEEANTELEVKIRDWY. The 312-residue stretch at 84–395 folds into the IF rod domain; it reads EKATMQNLND…RLLEGEDAHL (312 aa). The peptide epitope S1; induces T-cell and keratinocyte proliferation and IFN-gamma production stretch occupies residues 102-116; sequence VRALEEANTELEVKI. T110 is modified (phosphothreonine). The interval 121–138 is linker 1; that stretch reads QRQAPGPARDYSQYYRTI. A coil 1B region spans residues 139–230; the sequence is EELQNKILTA…NHEEEMNALR (92 aa). The peptide epitope S2; induces T-cell proliferation and IFN-gamma production stretch occupies residues 153 to 167; it reads ANILLQIDNARLAAD. Positions 231–250 are linker 12; the sequence is GQVGGEINVEMDAAPGVDLS. Positions 251–392 are coil 2; that stretch reads RILNEMRDQY…TYRRLLEGED (142 aa). Residue K278 forms a Glycyl lysine isopeptide (Lys-Gly) (interchain with G-Cter in SUMO2) linkage. A Phosphothreonine modification is found at T279. Position 323 is a phosphoserine (S323). Residues 332–346 are peptide epitope S4; induces T-cell and keratinocyte proliferation and IFN-gamma production; sequence ENRYCVQLSQIQGLI. Positions 393–432 are tail; sequence AHLTQYKKEPVTTRQVRTIVEEVQDGKVISSREQVHQTTR. Residues K399, K400, and K419 each participate in a glycyl lysine isopeptide (Lys-Gly) (interchain with G-Cter in SUMO1); alternate cross-link. Residues K399, K400, and K419 each participate in a glycyl lysine isopeptide (Lys-Gly) (interchain with G-Cter in SUMO2); alternate cross-link.

It belongs to the intermediate filament family. Heterodimer of a type I and a type II keratin. KRT17 associates with KRT6 isomers (KRT6A or KRT6B). Interacts with TRADD and SFN. Post-translationally, phosphorylation at Ser-44 occurs in a growth- and stress-dependent fashion in skin keratinocytes, it has no effect on filament organization. Expressed in the outer root sheath and medulla region of hair follicle specifically from eyebrow and beard, digital pulp, nail matrix and nail bed epithelium, mucosal stratified squamous epithelia and in basal cells of oral epithelium, palmoplantar epidermis and sweat and mammary glands. Also expressed in myoepithelium of prostate, basal layer of urinary bladder, cambial cells of sebaceous gland and in exocervix (at protein level).

Its subcellular location is the cytoplasm. Type I keratin involved in the formation and maintenance of various skin appendages, specifically in determining shape and orientation of hair. Required for the correct growth of hair follicles, in particular for the persistence of the anagen (growth) state. Modulates the function of TNF-alpha in the specific context of hair cycling. Regulates protein synthesis and epithelial cell growth through binding to the adapter protein SFN and by stimulating Akt/mTOR pathway. Involved in tissue repair. May be a marker of basal cell differentiation in complex epithelia and therefore indicative of a certain type of epithelial 'stem cells'. Acts as a promoter of epithelial proliferation by acting a regulator of immune response in skin: promotes Th1/Th17-dominated immune environment contributing to the development of basaloid skin tumors. May act as an autoantigen in the immunopathogenesis of psoriasis, with certain peptide regions being a major target for autoreactive T-cells and hence causing their proliferation. This Homo sapiens (Human) protein is Keratin, type I cytoskeletal 17 (KRT17).